Here is a 336-residue protein sequence, read N- to C-terminus: Alpha-N-acetylgalactosaminide alpha-2,6-sialyltransferase 5 (336 aa).

The Cytoplasmic segment spans residues 1–8 (MKTLMRHG). A helical; Signal-anchor for type II membrane protein membrane pass occupies residues 9 to 29 (LAVCLALTTMCTSLLLVYSSL). At 30–336 (GGQKERPPQQ…INHPENKPVF (307 aa)) the chain is on the lumenal side. Residues 32–81 (QKERPPQQQQQQQQQQQQASATGSSQPAAESSTQQRPGVPAGPRPLDGYL) form a disordered region. A compositionally biased stretch (low complexity) spans 38–49 (QQQQQQQQQQQQ). The segment covering 50-67 (ASATGSSQPAAESSTQQR) has biased composition (polar residues). Cys-96 and Cys-245 form a disulfide bridge. N-linked (GlcNAc...) asparagine glycans are attached at residues Asn-137 and Asn-161.

The protein belongs to the glycosyltransferase 29 family.

The protein resides in the golgi apparatus membrane. The enzyme catalyses a ganglioside GM1b (d18:1(4E)) + CMP-N-acetyl-beta-neuraminate = a ganglioside GD1alpha (d18:1(4E)) + CMP + H(+). It catalyses the reaction N-acetyl-alpha-neuraminosyl-(2-&gt;3)-beta-D-galactosyl-(1-&gt;3)-N-acetyl-beta-D-glucosaminyl-(1-&gt;3)-beta-D-galactosyl-(1-&gt;4)-beta-D-glucosyl-(1&lt;-&gt;1')-N-acyl-sphing-4-enine + CMP-N-acetyl-beta-neuraminate = N-acetyl-alpha-neuraminosyl-(2-&gt;3)-beta-D-galactosyl-(1-&gt;3)-[N-acetyl-alpha-neuraminosyl-(2-&gt;6)]-N-acetyl-beta-D-glucosaminyl-(1-&gt;3)-beta-D-galactosyl-(1-&gt;4)-beta-D-glucosyl-(1&lt;-&gt;1')-N-acyl-sphing-4-enine + CMP + H(+). The protein operates within glycolipid biosynthesis. Its function is as follows. Predominantly catalyzes the biosynthesis of ganglioside GD1alpha from GM1b in the brain, by transferring the sialyl group (N-acetyl-alpha-neuraminyl or NeuAc) from CMP-NeuAc to the GalNAc residue on the NeuAc-alpha-2,3-Gal-beta-1,3-GalNAc sequence of GM1b. GD1alpha is a critical molecule in the communication and interaction between neuronal cells and their supportive cells, particularly in brain tissues, and functions as an adhesion molecule in the process of metastasis. Also shows activity towards sialyl Lc4Cer (N-acetyl-alpha-neuraminosyl-(2-&gt;3)-beta-D-galactosyl-(1-&gt;3)-N-acetyl-beta-D-glucosaminyl-(1-&gt;3)-beta-D-galactosyl-(1-&gt;4)-beta-D-glucosyl-(1&lt;-&gt;1')-N-acyl-sphing-4-enine) generating disialyl Lc4Cer, which can lead to the synthesis of disialyl Lewis a (Le(a)), suggested to be a cancer-associated antigen. The protein is Alpha-N-acetylgalactosaminide alpha-2,6-sialyltransferase 5 (ST6GALNAC5) of Homo sapiens (Human).